The sequence spans 398 residues: Chalcone synthase (398 aa).

The active site involves C167.

The protein belongs to the thiolase-like superfamily. Chalcone/stilbene synthases family.

The catalysed reaction is (E)-4-coumaroyl-CoA + 3 malonyl-CoA + 3 H(+) = 2',4,4',6'-tetrahydroxychalcone + 3 CO2 + 4 CoA. Its pathway is secondary metabolite biosynthesis; flavonoid biosynthesis. In terms of biological role, the primary product of this enzyme is 4,2',4',6'-tetrahydroxychalcone (also termed naringenin-chalcone or chalcone) which can under specific conditions spontaneously isomerize into naringenin. The polypeptide is Chalcone synthase (CHS) (Callistephus chinensis (China aster)).